Reading from the N-terminus, the 70-residue chain is Testis-expressed protein 53 (70 aa).

In terms of tissue distribution, expressed in Testis.

In Homo sapiens (Human), this protein is Testis-expressed protein 53.